The primary structure comprises 527 residues: Peptide chain release factor 3 (527 aa).

The region spanning 9–278 (NKRRTFAIIS…GLTQWAPKPQ (270 aa)) is the tr-type G domain. Residues 18 to 25 (SHPDAGKT), 86 to 90 (DTPGH), and 140 to 143 (NKLD) contribute to the GTP site.

This sequence belongs to the TRAFAC class translation factor GTPase superfamily. Classic translation factor GTPase family. PrfC subfamily.

It is found in the cytoplasm. Its function is as follows. Increases the formation of ribosomal termination complexes and stimulates activities of RF-1 and RF-2. It binds guanine nucleotides and has strong preference for UGA stop codons. It may interact directly with the ribosome. The stimulation of RF-1 and RF-2 is significantly reduced by GTP and GDP, but not by GMP. The chain is Peptide chain release factor 3 from Haemophilus influenzae (strain PittGG).